Reading from the N-terminus, the 71-residue chain is ATP synthase subunit c (71 aa).

Helical transmembrane passes span 5–25 (GAAI…AIIV) and 47–67 (FIGV…GFLI).

The protein belongs to the ATPase C chain family. F-type ATPases have 2 components, F(1) - the catalytic core - and F(0) - the membrane proton channel. F(1) has five subunits: alpha(3), beta(3), gamma(1), delta(1), epsilon(1). F(0) has three main subunits: a(1), b(2) and c(10-14). The alpha and beta chains form an alternating ring which encloses part of the gamma chain. F(1) is attached to F(0) by a central stalk formed by the gamma and epsilon chains, while a peripheral stalk is formed by the delta and b chains.

It localises to the cell membrane. Its function is as follows. F(1)F(0) ATP synthase produces ATP from ADP in the presence of a proton or sodium gradient. F-type ATPases consist of two structural domains, F(1) containing the extramembraneous catalytic core and F(0) containing the membrane proton channel, linked together by a central stalk and a peripheral stalk. During catalysis, ATP synthesis in the catalytic domain of F(1) is coupled via a rotary mechanism of the central stalk subunits to proton translocation. Key component of the F(0) channel; it plays a direct role in translocation across the membrane. A homomeric c-ring of between 10-14 subunits forms the central stalk rotor element with the F(1) delta and epsilon subunits. The polypeptide is ATP synthase subunit c (Alkalihalobacillus alcalophilus (Bacillus alcalophilus)).